The following is a 256-amino-acid chain: MDFTKPETVLNLQNIRDELVRMEDSIIFKFIERSHFATCPSVYEANHPGLEIPNFKGSFLDWALSNLEIAHSRIRRFESPDETPFFPDKIQKSFLPSINYPQILAPYAPEVNYNDKIKKVYIEKIIPLISKRDGDDKNNFGSVATRDIECLQSLSRRIHFGKFVAEAKFQSDIPLYTKLIKSKDVEGIMKNITNSAVEEKILERLTKKAEVYGVDPTNESGERRITPEYLVKIYKEIVIPITKEVEVEYLLRRLEE.

One can recognise a Chorismate mutase domain in the interval 3-255 (FTKPETVLNL…EVEYLLRRLE (253 aa)). Residues R75 and R76 each contribute to the L-tyrosine site. The L-tryptophan site is built by N138, N139, G141, and S142. L-tyrosine contacts are provided by N139, G141, S142, and T145.

As to quaternary structure, homodimer.

Its subcellular location is the cytoplasm. The catalysed reaction is chorismate = prephenate. It functions in the pathway metabolic intermediate biosynthesis; prephenate biosynthesis; prephenate from chorismate: step 1/1. Its activity is regulated as follows. Each dimer has two allosteric binding sites that can bind the regulatory effectors tryptophan or tyrosine. Can bind either one tryptophan or one tyrosine, two tryptophan or two tyrosine or one tryptophan and one tyrosine, which differentially affect the catalytic activity. Activated by tryptophan and subject to feedback inhibition by tyrosine. In the presence of both tryptophan and tyrosine, the enzyme is in the activated state. Functionally, catalyzes the Claisen rearrangement of chorismate to prephenate. Acts at the first branch point in the aromatic amino acid pathway where it steers biosynthesis towards phenylalanine and tyrosine, and away from tryptophan. The polypeptide is Chorismate mutase (Saccharomyces cerevisiae (strain ATCC 204508 / S288c) (Baker's yeast)).